We begin with the raw amino-acid sequence, 629 residues long: tRNA uridine 5-carboxymethylaminomethyl modification enzyme MnmG (629 aa).

Residues 13-18 (GGGHAG), Val-125, and Ser-180 each bind FAD. Residue 273 to 287 (GPRYCPSIEDKVMRF) coordinates NAD(+). FAD is bound at residue Gln-370.

This sequence belongs to the MnmG family. Homodimer. Heterotetramer of two MnmE and two MnmG subunits. FAD is required as a cofactor.

The protein resides in the cytoplasm. Functionally, NAD-binding protein involved in the addition of a carboxymethylaminomethyl (cmnm) group at the wobble position (U34) of certain tRNAs, forming tRNA-cmnm(5)s(2)U34. This chain is tRNA uridine 5-carboxymethylaminomethyl modification enzyme MnmG, found in Aliivibrio fischeri (strain ATCC 700601 / ES114) (Vibrio fischeri).